The sequence spans 152 residues: Small ribosomal subunit protein uS8m (152 aa).

It belongs to the universal ribosomal protein uS8 family.

It is found in the mitochondrion. This Dictyostelium discoideum (Social amoeba) protein is Small ribosomal subunit protein uS8m (mrps8).